A 116-amino-acid polypeptide reads, in one-letter code: S-adenosylmethionine decarboxylase proenzyme (116 aa).

Catalysis depends on Ser-63, which acts as the Schiff-base intermediate with substrate; via pyruvic acid. Pyruvic acid (Ser); by autocatalysis is present on Ser-63. His-68 acts as the Proton acceptor; for processing activity in catalysis. Residue Cys-83 is the Proton donor; for catalytic activity of the active site.

Belongs to the prokaryotic AdoMetDC family. Type 1 subfamily. As to quaternary structure, heterotetramer of two alpha and two beta chains arranged as a dimer of alpha/beta heterodimers. Pyruvate serves as cofactor. Is synthesized initially as an inactive proenzyme. Formation of the active enzyme involves a self-maturation process in which the active site pyruvoyl group is generated from an internal serine residue via an autocatalytic post-translational modification. Two non-identical subunits are generated from the proenzyme in this reaction, and the pyruvate is formed at the N-terminus of the alpha chain, which is derived from the carboxyl end of the proenzyme. The post-translation cleavage follows an unusual pathway, termed non-hydrolytic serinolysis, in which the side chain hydroxyl group of the serine supplies its oxygen atom to form the C-terminus of the beta chain, while the remainder of the serine residue undergoes an oxidative deamination to produce ammonia and the pyruvoyl group blocking the N-terminus of the alpha chain.

It carries out the reaction S-adenosyl-L-methionine + H(+) = S-adenosyl 3-(methylsulfanyl)propylamine + CO2. Its pathway is amine and polyamine biosynthesis; S-adenosylmethioninamine biosynthesis; S-adenosylmethioninamine from S-adenosyl-L-methionine: step 1/1. Functionally, catalyzes the decarboxylation of S-adenosylmethionine to S-adenosylmethioninamine (dcAdoMet), the propylamine donor required for the synthesis of the polyamines spermine and spermidine from the diamine putrescine. The chain is S-adenosylmethionine decarboxylase proenzyme from Clostridium botulinum (strain Okra / Type B1).